Consider the following 124-residue polypeptide: Small ribosomal subunit protein bS6 (124 aa).

Belongs to the bacterial ribosomal protein bS6 family.

Its function is as follows. Binds together with bS18 to 16S ribosomal RNA. The sequence is that of Small ribosomal subunit protein bS6 from Actinobacillus pleuropneumoniae serotype 5b (strain L20).